Reading from the N-terminus, the 651-residue chain is Protein SCARECROW 1 (651 aa).

Disordered regions lie at residues 1-33 (MGSS…ITSL) and 188-277 (SDPA…KQRD). Over residues 190-228 (PAPPPPPPPSHPALLPPDATAPPPPPTSVAALPPPPPPQ) the composition is skewed to pro residues. A coiled-coil region spans residues 253-280 (TAEETAAAAAAAKERKEEQRRKQRDEEG). The segment covering 254–263 (AEETAAAAAA) has biased composition (low complexity). The span at 264–277 (AKERKEEQRRKQRD) shows a compositional bias: basic and acidic residues. A GRAS domain is found at 274–644 (KQRDEEGLHL…LCLLTASAWR (371 aa)). Residues 281–345 (LHLLTLLLQC…VSSCLGLYAP (65 aa)) are leucine repeat I (LRI). The LxCxE motif signature appears at 288–292 (LQCAE). The interval 364 to 429 (FQVFNGISPF…GGPPRVRLTG (66 aa)) is VHIID. A VHIID motif is present at residues 395–399 (VHIID). The segment at 439–471 (ATGKRLSDFADTLGLPFEFCPVADKAGNLDPEK) is leucine repeat II (LRII). The interval 480–567 (VAVHWLRHSL…QQLLSREIRN (88 aa)) is PFYRE. Residues 570-644 (AVGGPARTGD…LCLLTASAWR (75 aa)) are SAW.

It belongs to the GRAS family. Interacts with SHR1, but not with SHR2. Expressed in the initial daughter cell before its asymmetric division and remains expressed in the endodermal cell layer after the division.

It localises to the nucleus. Transcription factor required for quiescent center cells specification and maintenance of surrounding stem cells, and for the asymmetric cell division involved in radial pattern formation in roots. Essential for cell division but not differentiation of the ground tissue. Regulates the radial organization of the shoot axial organs. Restricts SHR movment and sequesters it into the nucleus of the endodermis. The sequence is that of Protein SCARECROW 1 (SCR1) from Oryza sativa subsp. japonica (Rice).